Reading from the N-terminus, the 244-residue chain is Methylthioribulose-1-phosphate dehydratase (244 aa).

Cys89 contributes to the substrate binding site. Zn(2+) contacts are provided by His107 and His109. Catalysis depends on Glu130, which acts as the Proton donor/acceptor. His192 provides a ligand contact to Zn(2+).

It belongs to the aldolase class II family. MtnB subfamily. Zn(2+) is required as a cofactor.

It is found in the cytoplasm. It catalyses the reaction 5-(methylsulfanyl)-D-ribulose 1-phosphate = 5-methylsulfanyl-2,3-dioxopentyl phosphate + H2O. Its pathway is amino-acid biosynthesis; L-methionine biosynthesis via salvage pathway; L-methionine from S-methyl-5-thio-alpha-D-ribose 1-phosphate: step 2/6. Catalyzes the dehydration of methylthioribulose-1-phosphate (MTRu-1-P) into 2,3-diketo-5-methylthiopentyl-1-phosphate (DK-MTP-1-P). This is Methylthioribulose-1-phosphate dehydratase from Saccharomyces cerevisiae (strain AWRI1631) (Baker's yeast).